The primary structure comprises 277 residues: Large ribosomal subunit protein uL2 (277 aa).

A disordered region spans residues glycine 222 to lysine 277.

Belongs to the universal ribosomal protein uL2 family. Part of the 50S ribosomal subunit. Forms a bridge to the 30S subunit in the 70S ribosome.

One of the primary rRNA binding proteins. Required for association of the 30S and 50S subunits to form the 70S ribosome, for tRNA binding and peptide bond formation. It has been suggested to have peptidyltransferase activity; this is somewhat controversial. Makes several contacts with the 16S rRNA in the 70S ribosome. This Bartonella tribocorum (strain CIP 105476 / IBS 506) protein is Large ribosomal subunit protein uL2.